The chain runs to 202 residues: COMM domain-containing protein 10 (202 aa).

At Ala2 the chain carries N-acetylalanine. In terms of domain architecture, COMM spans 133-202 (KLETVGWQLN…TIQAQLDSLT (70 aa)). Ser155 is modified (phosphoserine).

Belongs to the COMM domain-containing protein 10 family. As to quaternary structure, component of the commander complex consisting of the CCC subcomplex and the retriever subcomplex. Component of the CCC (COMMD/CCDC22/CCDC93) subcomplex consisting of COMMD1, COMMD2, COMMD3, COMMD4, COMMD5, COMMD6, COMMD7, COMMD8, COMMD9, COMMD10, CCDC22 and CCDC93; within the complex forms a heterodimer with COMMD5. Interacts with RELA, RELB, NFKB1/p105, NFKB2/p100. Interacts with CCDC22, CCDC93, SCNN1B, CUL1, CUL2, CUL3, CUL4A, CUL4B, CUL7. In terms of tissue distribution, ubiquitous.

It is found in the cytoplasm. The protein resides in the nucleus. Its function is as follows. Scaffold protein in the commander complex that is essential for endosomal recycling of transmembrane cargos; the commander complex is composed of the CCC subcomplex and the retriever subcomplex. May modulate activity of cullin-RING E3 ubiquitin ligase (CRL) complexes. May down-regulate activation of NF-kappa-B. The chain is COMM domain-containing protein 10 (COMMD10) from Homo sapiens (Human).